Reading from the N-terminus, the 303-residue chain is Methionyl-tRNA formyltransferase (303 aa).

Position 108-111 (108-111 (SDLP)) interacts with (6S)-5,6,7,8-tetrahydrofolate.

Belongs to the Fmt family.

The enzyme catalyses L-methionyl-tRNA(fMet) + (6R)-10-formyltetrahydrofolate = N-formyl-L-methionyl-tRNA(fMet) + (6S)-5,6,7,8-tetrahydrofolate + H(+). In terms of biological role, attaches a formyl group to the free amino group of methionyl-tRNA(fMet). The formyl group appears to play a dual role in the initiator identity of N-formylmethionyl-tRNA by promoting its recognition by IF2 and preventing the misappropriation of this tRNA by the elongation apparatus. This Rickettsia africae (strain ESF-5) protein is Methionyl-tRNA formyltransferase.